The sequence spans 356 residues: Tyrosine recombinase XerS (356 aa).

In terms of domain architecture, Core-binding (CB) spans 16–121 (LMPWYVLEYY…ALSSLYKYLT (106 aa)). Positions 169–354 (GFLTYIDQEH…VNDEQKNALD (186 aa)) constitute a Tyr recombinase domain. Residues Arg-210, Lys-234, His-306, Arg-309, and His-332 contribute to the active site. Tyr-341 acts as the O-(3'-phospho-DNA)-tyrosine intermediate in catalysis.

This sequence belongs to the 'phage' integrase family. XerS subfamily.

The protein localises to the cytoplasm. FtsK is required for recombination. In terms of biological role, site-specific tyrosine recombinase, which acts by catalyzing the cutting and rejoining of the recombining DNA molecules. Essential to convert dimers of the bacterial chromosome into monomers to permit their segregation at cell division. The protein is Tyrosine recombinase XerS of Streptococcus pneumoniae (strain P1031).